Reading from the N-terminus, the 418-residue chain is NADH-quinone oxidoreductase subunit D (418 aa).

This sequence belongs to the complex I 49 kDa subunit family. As to quaternary structure, NDH-1 is composed of 14 different subunits. Subunits NuoB, C, D, E, F, and G constitute the peripheral sector of the complex.

The protein localises to the cell inner membrane. It carries out the reaction a quinone + NADH + 5 H(+)(in) = a quinol + NAD(+) + 4 H(+)(out). Its function is as follows. NDH-1 shuttles electrons from NADH, via FMN and iron-sulfur (Fe-S) centers, to quinones in the respiratory chain. The immediate electron acceptor for the enzyme in this species is believed to be ubiquinone. Couples the redox reaction to proton translocation (for every two electrons transferred, four hydrogen ions are translocated across the cytoplasmic membrane), and thus conserves the redox energy in a proton gradient. The protein is NADH-quinone oxidoreductase subunit D of Bordetella bronchiseptica (strain ATCC BAA-588 / NCTC 13252 / RB50) (Alcaligenes bronchisepticus).